A 308-amino-acid chain; its full sequence is Aspartate carbamoyltransferase catalytic subunit (308 aa).

Residues arginine 57 and threonine 58 each contribute to the carbamoyl phosphate site. An L-aspartate-binding site is contributed by lysine 86. Carbamoyl phosphate-binding residues include arginine 107, histidine 135, and glutamine 138. Residues arginine 168 and arginine 229 each contribute to the L-aspartate site. Positions 268 and 269 each coordinate carbamoyl phosphate.

Belongs to the aspartate/ornithine carbamoyltransferase superfamily. ATCase family. In terms of assembly, heterooligomer of catalytic and regulatory chains.

It carries out the reaction carbamoyl phosphate + L-aspartate = N-carbamoyl-L-aspartate + phosphate + H(+). It functions in the pathway pyrimidine metabolism; UMP biosynthesis via de novo pathway; (S)-dihydroorotate from bicarbonate: step 2/3. In terms of biological role, catalyzes the condensation of carbamoyl phosphate and aspartate to form carbamoyl aspartate and inorganic phosphate, the committed step in the de novo pyrimidine nucleotide biosynthesis pathway. This is Aspartate carbamoyltransferase catalytic subunit from Pyrococcus abyssi (strain GE5 / Orsay).